Reading from the N-terminus, the 100-residue chain is Large ribosomal subunit protein bL28 (100 aa).

This sequence belongs to the bacterial ribosomal protein bL28 family.

In Ehrlichia ruminantium (strain Gardel), this protein is Large ribosomal subunit protein bL28.